Reading from the N-terminus, the 208-residue chain is Putative speedy protein E7 (208 aa).

The protein belongs to the Speedy/Ringo family.

The sequence is that of Putative speedy protein E7 (SPDYE7P) from Homo sapiens (Human).